Here is a 1526-residue protein sequence, read N- to C-terminus: High affinity cGMP-specific 3',5'-cyclic phosphodiesterase 9A (1526 aa).

Over residues 1–43 (MYQDSGCSSSSSRRGSSSAAAATSTAATAAETAAAAAATTTSS) the composition is skewed to low complexity. 3 disordered regions span residues 1–48 (MYQD…DEET), 266–348 (SSRS…SGTA), and 393–476 (RHHH…ASDC). 2 stretches are compositionally biased toward basic and acidic residues: residues 270–282 (RSSE…HEQD) and 305–314 (EHPSEKPERT). Composition is skewed to low complexity over residues 324-348 (IAVT…SGTA) and 401-440 (QQHQ…ATAT). Residues 441–462 (PSVEQPATSGTTNIHLQPTSLP) show a composition bias toward polar residues. Positions 664 to 985 (VKRRFLEICD…EYYRRLNDAQ (322 aa)) constitute a PDEase domain. His740 functions as the Proton donor in the catalytic mechanism. 740–744 (HNFRH) serves as a coordination point for 3',5'-cyclic GMP. Zn(2+) is bound by residues His744, His780, Asp781, and Asp890. 3',5'-cyclic GMP contacts are provided by Asp781 and Asp890. A Mg(2+)-binding site is contributed by Asp781. Disordered stretches follow at residues 986 to 1170 (TKTR…SSGG), 1265 to 1284 (TEAD…KKIP), 1314 to 1351 (SNGS…GSSW), 1372 to 1406 (RFGS…DGLG), and 1469 to 1496 (RYSS…LTTG). Residues 993–1005 (ADSNTSATSDSNS) are compositionally biased toward low complexity. Residues 1033–1057 (NSQGSGGGGGGGGGGGAGGGTGSGC) show a composition bias toward gly residues. Residues 1065-1093 (VSPQMPRSGSGISVKSRRSIPSQKSASRT) show a composition bias toward polar residues. Over residues 1125–1136 (VAEKTSKFKVDT) the composition is skewed to basic and acidic residues. The span at 1139 to 1148 (SSNRSKSSHS) shows a compositional bias: low complexity. The segment covering 1314–1324 (SNGSTRSSASS) has biased composition (low complexity). Over residues 1325-1340 (GRGGSGVPGGSGGSGM) the composition is skewed to gly residues. Low complexity-rich tracts occupy residues 1341–1350 (PGPSAGSGSS) and 1375–1397 (STRS…NANG). Positions 1470–1486 (YSSNDSSRHPSNNTLQS) are enriched in polar residues.

It belongs to the cyclic nucleotide phosphodiesterase family. PDE9 subfamily. Zn(2+) is required as a cofactor. Mg(2+) serves as cofactor. In terms of tissue distribution, expressed in Malpighian tubules and adult fly head.

The catalysed reaction is 3',5'-cyclic GMP + H2O = GMP + H(+). It participates in purine metabolism; 3',5'-cyclic GMP degradation; GMP from 3',5'-cyclic GMP: step 1/1. In terms of biological role, specifically hydrolyzes the second messenger cGMP, which is a key regulator of many important physiological processes. Highly specific: compared to other members of the cyclic nucleotide phosphodiesterase family, has the highest affinity and selectivity for cGMP. The sequence is that of High affinity cGMP-specific 3',5'-cyclic phosphodiesterase 9A from Drosophila melanogaster (Fruit fly).